Consider the following 477-residue polypeptide: UDP-N-acetylmuramate--L-alanine ligase (477 aa).

Position 125 to 131 (125 to 131) interacts with ATP; it reads GTHGKTT.

The protein belongs to the MurCDEF family.

The protein localises to the cytoplasm. The catalysed reaction is UDP-N-acetyl-alpha-D-muramate + L-alanine + ATP = UDP-N-acetyl-alpha-D-muramoyl-L-alanine + ADP + phosphate + H(+). Its pathway is cell wall biogenesis; peptidoglycan biosynthesis. Functionally, cell wall formation. This chain is UDP-N-acetylmuramate--L-alanine ligase, found in Acidothermus cellulolyticus (strain ATCC 43068 / DSM 8971 / 11B).